Here is an 83-residue protein sequence, read N- to C-terminus: Toxin TdNa5 (83 aa).

Residues 1–20 (MKTIIFFIACLMLIDVVVES) form the signal peptide. The LCN-type CS-alpha/beta domain maps to 21 to 82 (KDGYIIEHRG…IFDSNNNKCG (62 aa)). Intrachain disulfides connect Cys-31–Cys-81, Cys-35–Cys-57, Cys-43–Cys-62, and Cys-47–Cys-64. Cysteine amide is present on Cys-81.

It belongs to the long (4 C-C) scorpion toxin superfamily. Sodium channel inhibitor family. Beta subfamily. Expressed by the venom gland.

The protein resides in the secreted. Its function is as follows. Inhibits the sodium currents (Nav) in an apparent irreversible manner. Produces small depolarization and induces repetitive firing in squid axons. Is specific for arthropods (crickets, triatomides, crabs and squids), but is non-toxic to mice. Shows antibacterial activity against both Gram-positive and Gram-negative bacteria. The sequence is that of Toxin TdNa5 from Tityus discrepans (Venezuelan scorpion).